We begin with the raw amino-acid sequence, 363 residues long: 3-isopropylmalate dehydrogenase (363 aa).

Gly78–Glu91 contacts NAD(+). Substrate-binding residues include Arg99, Arg109, Arg138, and Asp227. Mg(2+) contacts are provided by Asp227, Asp251, and Asp255. NAD(+) is bound at residue Gly285–Asn297.

This sequence belongs to the isocitrate and isopropylmalate dehydrogenases family. LeuB type 1 subfamily. As to quaternary structure, homodimer. Requires Mg(2+) as cofactor. It depends on Mn(2+) as a cofactor.

It is found in the cytoplasm. The catalysed reaction is (2R,3S)-3-isopropylmalate + NAD(+) = 4-methyl-2-oxopentanoate + CO2 + NADH. It functions in the pathway amino-acid biosynthesis; L-leucine biosynthesis; L-leucine from 3-methyl-2-oxobutanoate: step 3/4. In terms of biological role, catalyzes the oxidation of 3-carboxy-2-hydroxy-4-methylpentanoate (3-isopropylmalate) to 3-carboxy-4-methyl-2-oxopentanoate. The product decarboxylates to 4-methyl-2 oxopentanoate. This chain is 3-isopropylmalate dehydrogenase, found in Pectobacterium atrosepticum (strain SCRI 1043 / ATCC BAA-672) (Erwinia carotovora subsp. atroseptica).